We begin with the raw amino-acid sequence, 849 residues long: Protein translocase subunit SecA (849 aa).

ATP contacts are provided by residues Gln85, 103–107, and Asp493; that span reads GEGKT. Zn(2+)-binding residues include Cys832, Cys834, Cys843, and His844.

The protein belongs to the SecA family. Monomer and homodimer. Part of the essential Sec protein translocation apparatus which comprises SecA, SecYEG and auxiliary proteins SecDF. Other proteins may also be involved. The cofactor is Zn(2+).

It is found in the cell membrane. It localises to the cytoplasm. It catalyses the reaction ATP + H2O + cellular proteinSide 1 = ADP + phosphate + cellular proteinSide 2.. Functionally, part of the Sec protein translocase complex. Interacts with the SecYEG preprotein conducting channel. Has a central role in coupling the hydrolysis of ATP to the transfer of proteins into and across the cell membrane, serving as an ATP-driven molecular motor driving the stepwise translocation of polypeptide chains across the membrane. This Streptococcus thermophilus (strain CNRZ 1066) protein is Protein translocase subunit SecA.